A 116-amino-acid polypeptide reads, in one-letter code: Ribosome-binding factor A (116 aa).

Belongs to the RbfA family. In terms of assembly, monomer. Binds 30S ribosomal subunits, but not 50S ribosomal subunits or 70S ribosomes.

The protein localises to the cytoplasm. In terms of biological role, one of several proteins that assist in the late maturation steps of the functional core of the 30S ribosomal subunit. Associates with free 30S ribosomal subunits (but not with 30S subunits that are part of 70S ribosomes or polysomes). Required for efficient processing of 16S rRNA. May interact with the 5'-terminal helix region of 16S rRNA. This is Ribosome-binding factor A from Clostridium perfringens (strain 13 / Type A).